The following is a 136-amino-acid chain: Glutamate mutase sigma subunit (136 aa).

The B12-binding domain maps to 3 to 136 (KKKIVIGVIG…IIDLKKDFKI (134 aa)). Adenosylcob(III)alamin is bound by residues 13 to 17 (SDCHT), His16, and 61 to 63 (SSI).

The protein belongs to the methylaspartate mutase GlmS subunit family. In terms of assembly, heterotetramer composed of 2 epsilon subunits (GlmE) and 2 sigma subunits (GlmS). GlmE exists as a homodimer and GlmS as a monomer. Adenosylcob(III)alamin serves as cofactor.

The enzyme catalyses (2S,3S)-3-methyl-L-aspartate = L-glutamate. The protein operates within amino-acid degradation; L-glutamate degradation via mesaconate pathway; acetate and pyruvate from L-glutamate: step 1/4. Its function is as follows. Catalyzes the carbon skeleton rearrangement of L-glutamate to L-threo-3-methylaspartate ((2S,3S)-3-methylaspartate). The sequence is that of Glutamate mutase sigma subunit from Fusobacterium nucleatum subsp. nucleatum (strain ATCC 25586 / DSM 15643 / BCRC 10681 / CIP 101130 / JCM 8532 / KCTC 2640 / LMG 13131 / VPI 4355).